The sequence spans 60 residues: Mastoparan-A (60 aa).

Residues 1-27 form the signal peptide; that stretch reads MKNTILILFTAFIALLGFFGMSAEALA. AXPX repeat units lie at residues 27–30, 31–34, 35–38, and 41–43; these read ADPI, ADPL, AGPN, and ADP. The propeptide occupies 28 to 45; sequence DPIADPLAGPNAEADPEA. I59 is modified (isoleucine amide).

The protein belongs to the MCD family. Mastoparan subfamily. In terms of tissue distribution, expressed by the venom gland.

The protein resides in the secreted. Its subcellular location is the target cell membrane. Antimicrobial and mast cell degranulating peptide. Has broad spectrum antibacterial activity against both Gram-positive and Gram-negative bacteria (S.aureus MIC=32-64 ug/ml, S.xylosus MIC=2 ug/ml, S.alactolyticus MIC=12 ug/ml, C.koseri MIC=4 ug/ml, E.coli MIC=8 ug/ml, K.pneumoniae MIC=32 ug/ml, P.aerugiosa MIC=192 ug/ml, S.choleraesuis MIC=32 ug/ml, S.typhimurium MIC=32 ug/ml, V.parahamelytics MIC=16 ug/ml). Affects membrane permeability of E.coli. Shows hemolytic activities on sheep, chicken and human erythrocytes. Its mast cell degranulation activity may be related to the activation of G-protein coupled receptors in mast cells as well as interaction with other proteins located in cell endosomal membranes in the mast cells. In Vespa analis (Yellow-vented hornet), this protein is Mastoparan-A.